Reading from the N-terminus, the 117-residue chain is Large ribosomal subunit protein eL8 (117 aa).

It belongs to the eukaryotic ribosomal protein eL8 family. As to quaternary structure, part of the 50S ribosomal subunit. Probably part of the RNase P complex.

Its subcellular location is the cytoplasm. Its function is as follows. Multifunctional RNA-binding protein that recognizes the K-turn motif in ribosomal RNA, the RNA component of RNase P, box H/ACA, box C/D and box C'/D' sRNAs. In Methanocaldococcus jannaschii (strain ATCC 43067 / DSM 2661 / JAL-1 / JCM 10045 / NBRC 100440) (Methanococcus jannaschii), this protein is Large ribosomal subunit protein eL8.